The following is a 565-amino-acid chain: MRQSKFFMPTLKEAPSDAVAESHKLMIRGGYIRQVTAGVYAYLPLGYRVLRKAEGIIEDEMEKINVPEMIMPHLLPATLWQESGRYKKYGAEMFKLKDRHGRESLLGPTHEETFTEIIAKNLKSYKQMPLALYQIQTKFRDENRPRFGLLRGREFVMLDGYSFAATRDQLDEQFDDQKSAYKRIFKRAGVTVHPVIADSGTMGGKNSTEFQAPAAIGEDTIATNEKGTYAANLEMAKSIDTFKQEPEDAKELTKVATPGCDTIEKLAKFLNVPATRIVKSILYIADDQKVLVLIRGDKQINEVKLGHVLDADEVHEADSADLKEITGSEKGGVGPVDADWADKIIADETVKDLYNVVVGAGETDYQFENANLDRDFKVDEFVDIRTANEGEPDPVDHLPLKFTTSIEVGHIFKLGTYYTKTMGADFLDQNGKAKPVIMGSYGIGVTRMLSAAVEQHLTEHGVAWPKEIAPFAIHIVQMKMNKEDQTELAEKLEKKFSEKYDVLYDDRKERAGVKFADADLVGAPIRITVGKKAADGIVEVKRPTDDKATEISIDELDKFVNQELG.

The protein belongs to the class-II aminoacyl-tRNA synthetase family. ProS type 1 subfamily. As to quaternary structure, homodimer.

It localises to the cytoplasm. The enzyme catalyses tRNA(Pro) + L-proline + ATP = L-prolyl-tRNA(Pro) + AMP + diphosphate. Catalyzes the attachment of proline to tRNA(Pro) in a two-step reaction: proline is first activated by ATP to form Pro-AMP and then transferred to the acceptor end of tRNA(Pro). As ProRS can inadvertently accommodate and process non-cognate amino acids such as alanine and cysteine, to avoid such errors it has two additional distinct editing activities against alanine. One activity is designated as 'pretransfer' editing and involves the tRNA(Pro)-independent hydrolysis of activated Ala-AMP. The other activity is designated 'posttransfer' editing and involves deacylation of mischarged Ala-tRNA(Pro). The misacylated Cys-tRNA(Pro) is not edited by ProRS. In Lactobacillus helveticus (strain DPC 4571), this protein is Proline--tRNA ligase.